The primary structure comprises 323 residues: tRNA U34 carboxymethyltransferase (323 aa).

Residues K91, W105, K110, G130, 152–154 (DPS), 181–182 (IE), M196, Y200, and R315 contribute to the carboxy-S-adenosyl-L-methionine site.

Belongs to the class I-like SAM-binding methyltransferase superfamily. CmoB family. As to quaternary structure, homotetramer.

The catalysed reaction is carboxy-S-adenosyl-L-methionine + 5-hydroxyuridine(34) in tRNA = 5-carboxymethoxyuridine(34) in tRNA + S-adenosyl-L-homocysteine + H(+). Functionally, catalyzes carboxymethyl transfer from carboxy-S-adenosyl-L-methionine (Cx-SAM) to 5-hydroxyuridine (ho5U) to form 5-carboxymethoxyuridine (cmo5U) at position 34 in tRNAs. This is tRNA U34 carboxymethyltransferase from Vibrio vulnificus (strain CMCP6).